A 206-amino-acid chain; its full sequence is N-(5'-phosphoribosyl)anthranilate isomerase (206 aa).

It belongs to the TrpF family.

The catalysed reaction is N-(5-phospho-beta-D-ribosyl)anthranilate = 1-(2-carboxyphenylamino)-1-deoxy-D-ribulose 5-phosphate. The protein operates within amino-acid biosynthesis; L-tryptophan biosynthesis; L-tryptophan from chorismate: step 3/5. The chain is N-(5'-phosphoribosyl)anthranilate isomerase from Rubrobacter xylanophilus (strain DSM 9941 / JCM 11954 / NBRC 16129 / PRD-1).